Consider the following 445-residue polypeptide: Ubiquitin carboxyl-terminal hydrolase MINDY-3 (445 aa).

C51 (nucleophile) is an active-site residue. The residue at position 125 (S125) is a Phosphoserine. H287 functions as the Proton acceptor in the catalytic mechanism.

It belongs to the MINDY deubiquitinase family. FAM188 subfamily. In terms of assembly, interacts with COPS5.

It localises to the nucleus. It carries out the reaction Thiol-dependent hydrolysis of ester, thioester, amide, peptide and isopeptide bonds formed by the C-terminal Gly of ubiquitin (a 76-residue protein attached to proteins as an intracellular targeting signal).. In terms of biological role, hydrolase that can remove 'Lys-48'-linked conjugated ubiquitin from proteins. The sequence is that of Ubiquitin carboxyl-terminal hydrolase MINDY-3 (MINDY3) from Bos taurus (Bovine).